We begin with the raw amino-acid sequence, 166 residues long: NAD(P)H-quinone oxidoreductase subunit I, chloroplastic (166 aa).

2 4Fe-4S ferredoxin-type domains span residues 55-84 and 95-124; these read GRIHFEFDKCIACEVCVRVCPIDLPVVDWK and LNYSIDFGICIFCGNCVEYCPTNCLSMTEE. [4Fe-4S] cluster is bound by residues Cys-64, Cys-67, Cys-70, Cys-74, Cys-104, Cys-107, Cys-110, and Cys-114.

It belongs to the complex I 23 kDa subunit family. As to quaternary structure, NDH is composed of at least 16 different subunits, 5 of which are encoded in the nucleus. [4Fe-4S] cluster is required as a cofactor.

Its subcellular location is the plastid. It localises to the chloroplast thylakoid membrane. The catalysed reaction is a plastoquinone + NADH + (n+1) H(+)(in) = a plastoquinol + NAD(+) + n H(+)(out). The enzyme catalyses a plastoquinone + NADPH + (n+1) H(+)(in) = a plastoquinol + NADP(+) + n H(+)(out). Functionally, NDH shuttles electrons from NAD(P)H:plastoquinone, via FMN and iron-sulfur (Fe-S) centers, to quinones in the photosynthetic chain and possibly in a chloroplast respiratory chain. The immediate electron acceptor for the enzyme in this species is believed to be plastoquinone. Couples the redox reaction to proton translocation, and thus conserves the redox energy in a proton gradient. This Oteiza scandens (Climbing oteiza) protein is NAD(P)H-quinone oxidoreductase subunit I, chloroplastic.